A 181-amino-acid chain; its full sequence is Bifunctional protein PyrR (181 aa).

Substrate contacts are provided by residues 39–40, 104–112, R137, and V161; these read RR and DDVLYTGRT. The PRPP-binding signature appears at 100 to 112; the sequence is VILVDDVLYTGRT.

The protein belongs to the purine/pyrimidine phosphoribosyltransferase family. PyrR subfamily.

The enzyme catalyses UMP + diphosphate = 5-phospho-alpha-D-ribose 1-diphosphate + uracil. Functionally, regulates the transcription of the pyrimidine nucleotide (pyr) operon in response to exogenous pyrimidines. Also displays a weak uracil phosphoribosyltransferase activity which is not physiologically significant. This is Bifunctional protein PyrR from Pasteurella multocida (strain Pm70).